Reading from the N-terminus, the 223-residue chain is GTP cyclohydrolase 1 (223 aa).

3 residues coordinate Zn(2+): C111, H114, and C182.

It belongs to the GTP cyclohydrolase I family. In terms of assembly, homomer.

The catalysed reaction is GTP + H2O = 7,8-dihydroneopterin 3'-triphosphate + formate + H(+). Its pathway is cofactor biosynthesis; 7,8-dihydroneopterin triphosphate biosynthesis; 7,8-dihydroneopterin triphosphate from GTP: step 1/1. The sequence is that of GTP cyclohydrolase 1 from Flavobacterium johnsoniae (strain ATCC 17061 / DSM 2064 / JCM 8514 / BCRC 14874 / CCUG 350202 / NBRC 14942 / NCIMB 11054 / UW101) (Cytophaga johnsonae).